Reading from the N-terminus, the 159-residue chain is MRIGTGIDVHQFAEGRKLIVGGVEIPHSKGLKGHSDADVLLHAISDALLGAAALGDIGKHFPDTSPQFKDIDSMILLQHVGKLIAEEGYAIGNIDSVLVMEKPKVAPHIMAMRGNIAACLDIDVSKVAVKATTTEKLGYVGREEGVAAHAICLIEERKQ.

A divalent metal cation-binding residues include D8 and H10. 4-CDP-2-C-methyl-D-erythritol 2-phosphate-binding positions include 8-10 (DVH) and 34-35 (HS). H42 provides a ligand contact to a divalent metal cation. Residues 56 to 58 (DIG), 132 to 135 (TTTE), and R142 contribute to the 4-CDP-2-C-methyl-D-erythritol 2-phosphate site.

The protein belongs to the IspF family. Homotrimer. A divalent metal cation serves as cofactor.

It catalyses the reaction 4-CDP-2-C-methyl-D-erythritol 2-phosphate = 2-C-methyl-D-erythritol 2,4-cyclic diphosphate + CMP. The protein operates within isoprenoid biosynthesis; isopentenyl diphosphate biosynthesis via DXP pathway; isopentenyl diphosphate from 1-deoxy-D-xylulose 5-phosphate: step 4/6. Involved in the biosynthesis of isopentenyl diphosphate (IPP) and dimethylallyl diphosphate (DMAPP), two major building blocks of isoprenoid compounds. Catalyzes the conversion of 4-diphosphocytidyl-2-C-methyl-D-erythritol 2-phosphate (CDP-ME2P) to 2-C-methyl-D-erythritol 2,4-cyclodiphosphate (ME-CPP) with a corresponding release of cytidine 5-monophosphate (CMP). The protein is 2-C-methyl-D-erythritol 2,4-cyclodiphosphate synthase of Chlorobium phaeobacteroides (strain BS1).